A 62-amino-acid polypeptide reads, in one-letter code: Short neurotoxin 3 (62 aa).

4 disulfides stabilise this stretch: Cys3-Cys24, Cys17-Cys41, Cys43-Cys54, and Cys55-Cys60.

It belongs to the three-finger toxin family. Short-chain subfamily. Type I alpha-neurotoxin sub-subfamily. As to expression, expressed by the venom gland.

The protein resides in the secreted. In terms of biological role, binds to muscle nicotinic acetylcholine receptor (nAChR) and inhibit acetylcholine from binding to the receptor, thereby impairing neuromuscular transmission. This chain is Short neurotoxin 3, found in Naja mossambica (Mozambique spitting cobra).